Consider the following 545-residue polypeptide: Chaperonin GroEL (545 aa).

ATP-binding positions include 30-33 (TLGP), K51, 87-91 (DGTTT), G415, and D495.

Belongs to the chaperonin (HSP60) family. As to quaternary structure, forms a cylinder of 14 subunits composed of two heptameric rings stacked back-to-back. Interacts with the co-chaperonin GroES.

It localises to the cytoplasm. It carries out the reaction ATP + H2O + a folded polypeptide = ADP + phosphate + an unfolded polypeptide.. Together with its co-chaperonin GroES, plays an essential role in assisting protein folding. The GroEL-GroES system forms a nano-cage that allows encapsulation of the non-native substrate proteins and provides a physical environment optimized to promote and accelerate protein folding. This is Chaperonin GroEL from Shewanella sp. (strain W3-18-1).